The chain runs to 328 residues: Malate dehydrogenase (328 aa).

11-17 is a binding site for NAD(+); that stretch reads GAAGQIG. Arg94 and Arg100 together coordinate substrate. NAD(+) contacts are provided by residues Asn107, Gln114, and 131 to 133; that span reads VGN. The substrate site is built by Asn133 and Arg164. Catalysis depends on His189, which acts as the Proton acceptor.

The protein belongs to the LDH/MDH superfamily. MDH type 2 family.

The catalysed reaction is (S)-malate + NAD(+) = oxaloacetate + NADH + H(+). Its function is as follows. Catalyzes the reversible oxidation of malate to oxaloacetate. This chain is Malate dehydrogenase, found in Xanthomonas axonopodis pv. citri (strain 306).